The following is a 519-amino-acid chain: T-box transcription factor TBX5 (519 aa).

The segment at 1–46 (MADTEEAYGMPDTPVEAEPKELQCEPKQDNQLGASSKTPTSPPAAF) is disordered. The segment covering 17 to 28 (AEPKELQCEPKQ) has biased composition (basic and acidic residues). The span at 29–39 (DNQLGASSKTP) shows a compositional bias: polar residues. Positions 63 to 238 (LWLKFHEVGT…NNPFAKGFRG (176 aa)) form a DNA-binding region, T-box. 3 disordered regions span residues 254-282 (EYPVVPRSTVRQKVSSNHSPFSQETRNIT), 293-312 (CENGVSSTSQDLLPSSSAYT), and 326-372 (KRKV…TSFR). Polar residues predominate over residues 262-282 (TVRQKVSSNHSPFSQETRNIT). Positions 298-309 (SSTSQDLLPSSS) are enriched in low complexity. Over residues 328 to 342 (KVSEEPAEHSYKKPY) the composition is skewed to basic and acidic residues.

As to quaternary structure, monomer. Homodimer (via the T-box); binds DNA as homodimer.

The protein resides in the nucleus. The protein localises to the cytoplasm. Functionally, DNA-binding protein that regulates the transcription of several genes and is involved in heart development and limb pattern formation. May bind to the core DNA motif of promoters. This Xenopus laevis (African clawed frog) protein is T-box transcription factor TBX5 (tbx5).